Here is a 215-residue protein sequence, read N- to C-terminus: Ribosomal RNA small subunit methyltransferase G (215 aa).

S-adenosyl-L-methionine-binding positions include glycine 82, methionine 87, 133–134 (VE), and arginine 148.

This sequence belongs to the methyltransferase superfamily. RNA methyltransferase RsmG family.

The protein resides in the cytoplasm. It carries out the reaction guanosine(527) in 16S rRNA + S-adenosyl-L-methionine = N(7)-methylguanosine(527) in 16S rRNA + S-adenosyl-L-homocysteine. Functionally, specifically methylates the N7 position of guanine in position 527 of 16S rRNA. This is Ribosomal RNA small subunit methyltransferase G from Stutzerimonas stutzeri (strain A1501) (Pseudomonas stutzeri).